Consider the following 330-residue polypeptide: Free fatty acid receptor 2 (330 aa).

Over 1-8 the chain is Extracellular; the sequence is MTPDWHSS. A helical transmembrane segment spans residues 9-29; that stretch reads LILTAYILIFLTGLPANLLAL. Topologically, residues 30-43 are cytoplasmic; that stretch reads RAFMGRVRQPQPAP. Residues 44-64 traverse the membrane as a helical segment; it reads VHILLLNLTLADLLLLLLLPF. At 65–79 the chain is on the extracellular side; that stretch reads RIVEAASNFRWYLPK. The chain crosses the membrane as a helical span at residues 80-100; the sequence is IVCALTGFGFYSSIYCSTWLL. Topologically, residues 101–126 are cytoplasmic; sequence AGISMERYLGVAFPVQYKLSRRPLYG. The helical transmembrane segment at 127–147 threads the bilayer; sequence VIAALVAWIMSFGHCTIVIIV. The Extracellular segment spans residues 148–184; it reads QYLNSTEQVGTENQITCYENFTQEQLDVVLPVRLELC. Residues Asn-151 and Asn-167 are each glycosylated (N-linked (GlcNAc...) asparagine). Residues 185–205 traverse the membrane as a helical segment; that stretch reads LVLFFVPMAVTIFCYWRFVWI. The Cytoplasmic segment spans residues 206 to 219; sequence MLTQPHVGAQRRRR. A helical membrane pass occupies residues 220–240; the sequence is AVGLAVVTLLNFLVCFGPYNM. Residues 241-255 are Extracellular-facing; the sequence is SHLVGFYLRQSPSWR. The chain crosses the membrane as a helical span at residues 256–276; that stretch reads VEAVVFSSLNASLDPLLFYFS. The Cytoplasmic portion of the chain corresponds to 277 to 330; the sequence is SSVVRRAFGKGLLLIRNPASSMLGRGAKETVEGTKMDRGGSQAEGVQSSEFVTE. The segment at 306-330 is disordered; sequence TVEGTKMDRGGSQAEGVQSSEFVTE. The span at 320 to 330 shows a compositional bias: polar residues; that stretch reads EGVQSSEFVTE.

It belongs to the G-protein coupled receptor 1 family. In terms of assembly, interacts with FCN1 (via Fibrinogen C-terminal domain). As to expression, highly expressed in hematopoietic tissues, such as spleen and bone marrow, with highest levels in a subset of immune cells, including monocytes or neutrophils. Expressed in adipose tissues with high expression in differentiating adipocytes. Expressed by intestinal endocrine cells.

It localises to the cell membrane. Its function is as follows. G protein-coupled receptor that is activated by a major product of dietary fiber digestion, the short chain fatty acids (SCFAs), and that plays a role in the regulation of whole-body energy homeostasis and in intestinal immunity. In omnivorous mammals, the short chain fatty acids acetate, propionate and butyrate are produced primarily by the gut microbiome that metabolizes dietary fibers. SCFAs serve as a source of energy but also act as signaling molecules. That G protein-coupled receptor is probably coupled to the pertussis toxin-sensitive, G(i/o)-alpha family of G proteins but also to the Gq family. Its activation results in the formation of inositol 1,4,5-trisphosphate, the mobilization of intracellular calcium, the phosphorylation of the MAPK3/ERK1 and MAPK1/ERK2 kinases and the inhibition of intracellular cAMP accumulation. May play a role in glucose homeostasis by regulating the secretion of GLP-1, in response to short-chain fatty acids accumulating in the intestine. May also regulate the production of LEP/Leptin, a hormone acting on the central nervous system to inhibit food intake. Finally, may also regulate whole-body energy homeostasis through adipogenesis regulating both differentiation and lipid storage of adipocytes. In parallel to its role in energy homeostasis, may also mediate the activation of the inflammatory and immune responses by SCFA in the intestine, regulating the rapid production of chemokines and cytokines. May also play a role in the resolution of the inflammatory response and control chemotaxis in neutrophils. In addition to SCFAs, may also be activated by the extracellular lectin FCN1 in a process leading to activation of monocytes and inducing the secretion of interleukin-8/IL-8 in response to the presence of microbes. This Mus musculus (Mouse) protein is Free fatty acid receptor 2 (Ffar2).